The sequence spans 538 residues: Cytosolic Fe-S cluster assembly factor NAR1 homolog (538 aa).

The [4Fe-4S] cluster site is built by C19, C64, C67, C70, C218, C273, C453, and C457.

This sequence belongs to the NARF family.

It localises to the cytoplasm. Its subcellular location is the nucleus. Component of the cytosolic Fe/S protein assembly machinery. Required for maturation of extramitochondrial Fe/S proteins. May play a role in the transfer of pre-assembled Fe/S clusters to target apoproteins. The sequence is that of Cytosolic Fe-S cluster assembly factor NAR1 homolog from Schizosaccharomyces pombe (strain 972 / ATCC 24843) (Fission yeast).